We begin with the raw amino-acid sequence, 270 residues long: Putative [LysW]-aminoadipate/[LysW]-glutamate kinase (270 aa).

Substrate contacts are provided by residues 42-43 (GG), arginine 69, and asparagine 177.

Belongs to the acetylglutamate kinase family. LysZ subfamily.

The protein localises to the cytoplasm. The catalysed reaction is [amino-group carrier protein]-C-terminal-N-(1,4-dicarboxybutan-1-yl)-L-glutamine + ATP = [amino-group carrier protein]-C-terminal-N-(1-carboxy-5-phosphooxy-5-oxopentan-1-yl)-L-glutamine + ADP. The enzyme catalyses [amino-group carrier protein]-C-terminal-gamma-(L-glutamyl)-L-glutamate + ATP = [amino-group carrier protein]-C-terminal-gamma-(5-phospho-L-glutamyl)-L-glutamate + ADP. The protein operates within amino-acid biosynthesis; L-lysine biosynthesis via AAA pathway; L-lysine from L-alpha-aminoadipate (Thermus route): step 2/5. It participates in amino-acid biosynthesis; L-arginine biosynthesis. Functionally, involved in both the arginine and lysine biosynthetic pathways. Phosphorylates the LysW-bound precursors glutamate (for arginine biosynthesis), respectively alpha-aminoadipate (for lysine biosynthesis). This Aeropyrum pernix (strain ATCC 700893 / DSM 11879 / JCM 9820 / NBRC 100138 / K1) protein is Putative [LysW]-aminoadipate/[LysW]-glutamate kinase.